Consider the following 268-residue polypeptide: Embryonic abundant protein USP87 (268 aa).

Residues 1-22 (MEFAHLTVLSLFCLAFVGITAT) form the signal peptide. 5 repeat units span residues 50-55 (GKTNSL), 83-88 (GNTNSV), 101-106 (GVTDSI), 166-183 (YVVE…MCHR), and 202-222 (YVVS…VCHH). The segment at 50 to 106 (GKTNSLPIKSEELKQYSTLFFEHDLHPRKNFILGNTNSVGSIIRPFTKSRQGVTDSI) is 3 X 6 AA approximate repeats. Residues 68-259 (LFFEHDLHPR…GNKAAAWVPN (192 aa)) form the BURP domain. The tract at residues 166–222 (YVVEDVKKVGDNAVMCHRLNFEKVVFNCHQVRDTTAYVVSLVASDGTKTKALTVCHH) is 2 X approximate repeats. Residue N259 is glycosylated (N-linked (GlcNAc...) asparagine).

In terms of tissue distribution, seed.

The chain is Embryonic abundant protein USP87 from Vicia faba (Broad bean).